We begin with the raw amino-acid sequence, 423 residues long: TPR repeat-containing protein YpiA (423 aa).

9 TPR repeats span residues 33 to 66 (DEDKAIAAQLYYEWGDVEKAISLISDLHDLYPNE), 67 to 100 (TELTNFYAELLIDIDEEEKALAVLETIPETDPSY), 135 to 168 (PVIDFALGELYFAQGAYAKAVQYFKTTAEEQSEI), 171 to 204 (VNVHQRLAESLSASGEFEDAIPWYEKAVDENPDP), 238 to 271 (TSLYMPLSKSYEAEGMYEEALKTAKEGIRYDEYN), 272 to 305 (KELFLYAAKMALKIGKSEEGKKLLQEALALDPGF), 306 to 339 (VEALHTLLAVYHKEEDYDQIIDLIQEVRSYGEED), 340 to 373 (PKYNWYLASAYTELEQYEEAKQSFEAAYLHYRED), and 374 to 407 (RDFLYEYASFLLEEGLQKEALPLLKKVLEMDGAN).

As to quaternary structure, interacts with the RNA polymerase core.

This chain is TPR repeat-containing protein YpiA (ypiA), found in Bacillus subtilis (strain 168).